We begin with the raw amino-acid sequence, 316 residues long: Mycothiol acetyltransferase (316 aa).

N-acetyltransferase domains lie at 16-153 and 156-316; these read REVR…VPAV and VRIR…PAAN. Position 36 (glutamate 36) interacts with 1D-myo-inositol 2-(L-cysteinylamino)-2-deoxy-alpha-D-glucopyranoside. Residues 83-85 and 91-96 each bind acetyl-CoA; these read LVV and RRGIGS. 1D-myo-inositol 2-(L-cysteinylamino)-2-deoxy-alpha-D-glucopyranoside-binding residues include glutamate 183, lysine 228, and glutamate 238. Residues 242-244 and 249-255 contribute to the acetyl-CoA site; these read VGV and QGRGLGQ. Tyrosine 283 provides a ligand contact to 1D-myo-inositol 2-(L-cysteinylamino)-2-deoxy-alpha-D-glucopyranoside. 288–293 lines the acetyl-CoA pocket; sequence NVAAVR.

The protein belongs to the acetyltransferase family. MshD subfamily. In terms of assembly, monomer.

It catalyses the reaction 1D-myo-inositol 2-(L-cysteinylamino)-2-deoxy-alpha-D-glucopyranoside + acetyl-CoA = mycothiol + CoA + H(+). Its function is as follows. Catalyzes the transfer of acetyl from acetyl-CoA to desacetylmycothiol (Cys-GlcN-Ins) to form mycothiol. In Mycolicibacterium paratuberculosis (strain ATCC BAA-968 / K-10) (Mycobacterium paratuberculosis), this protein is Mycothiol acetyltransferase.